The primary structure comprises 451 residues: Eukaryotic translation initiation factor 3 subunit E (451 aa).

The PCI domain maps to 256 to 425 (TDLFFSPAYI…GTVIMNHPPQ (170 aa)).

This sequence belongs to the eIF-3 subunit E family. As to quaternary structure, component of the eukaryotic translation initiation factor 3 (eIF-3) complex.

Its subcellular location is the cytoplasm. Functionally, component of the eukaryotic translation initiation factor 3 (eIF-3) complex, which is involved in protein synthesis of a specialized repertoire of mRNAs and, together with other initiation factors, stimulates binding of mRNA and methionyl-tRNAi to the 40S ribosome. The eIF-3 complex specifically targets and initiates translation of a subset of mRNAs involved in cell proliferation. This Aspergillus fumigatus (strain CBS 144.89 / FGSC A1163 / CEA10) (Neosartorya fumigata) protein is Eukaryotic translation initiation factor 3 subunit E (int6).